The chain runs to 176 residues: ATP synthase subunit d, mitochondrial (176 aa).

In terms of assembly, F-type ATP synthases have 2 components, the catalytic core F(1) and the membrane-embedded component F(0), linked together by a central stalk and a peripheral stalk. The central stalk, also called rotor shaft, is often seen as part of F(1). The peripheral stalk is seen as part of F(0). F(0) contains the membrane channel next to the rotor. F-type ATP synthases form dimers but each monomer functions independently in ATP generation. The dimer consists of 17 different polypeptides: ATP1 (subunit alpha, 3 molecules per monomer, part of F(1)), ATP2 (subunit beta, 3 copies per monomer, part of F(1)), ATP3 (subunit gamma, part of the central stalk), ATP4 (subunit b, part of the peripheral stalk), ATP5/OSCP (subunit 5/OSCP, part of the peripheral stalk), ATP6 (subunit a, part of the peripheral stalk), ATP7 (subunit d, part of the peripheral stalk), ATP8 (subunit 8, part of the peripheral stalk), OLI1 (subunit c, part of the rotor, 10 molecules per monomer), ATP14 (subunit h, part of the peripheral stalk), ATP15 (subunit epsilon, part of the central stalk), ATP16 (subunit delta, part of the central stalk), ATP17 (subunit f, part of the peripheral stalk), ATP18 (subunit i/j, part of the peripheral stalk), ATP19 (subunit k, dimer-specific, at interface between monomers), ATP20 (subunit g, at interface between monomers), TIM11 (subunit e, at interface between monomers).

It is found in the mitochondrion inner membrane. Functionally, mitochondrial membrane ATP synthase (F(1)F(0) ATP synthase or Complex V) produces ATP from ADP in the presence of a proton gradient across the membrane which is generated by electron transport complexes of the respiratory chain. F-type ATP synthases consist of two structural domains, F(1) - containing the extramembraneous catalytic core, and F(0) - containing the membrane proton channel, linked together by a central stalk and a peripheral stalk. During catalysis, ATP synthesis in the catalytic domain of F(1) is coupled via a rotary mechanism of the central stalk subunits to proton translocation. Part of the complex F(0) domain and the peripheral stalk, which acts as a stator to hold the catalytic alpha/ATP1(3)beta/ATP2(3) subcomplex and subunit a/ATP6 static relative to the rotary elements. The sequence is that of ATP synthase subunit d, mitochondrial from Yarrowia lipolytica (strain CLIB 122 / E 150) (Yeast).